The primary structure comprises 388 residues: P2X purinoceptor 4 (388 aa).

The Cytoplasmic portion of the chain corresponds to 1-33 (MAGCCSVLGSFLFEYDTPRIVLIRSRKVGLMNR). The helical transmembrane segment at 34-54 (AVQLLILAYVIGWVFVWEKGY) threads the bilayer. Residues 55–338 (QETDSVVSSV…KFDIIPTMIN (284 aa)) lie on the Extracellular side of the membrane. Positions 67 and 69 each coordinate ATP. Residues K67 and K69 each coordinate CTP. Residues N75 and N110 are each glycosylated (N-linked (GlcNAc...) asparagine). Cystine bridges form between C116–C165, C126–C149, and C132–C159. N-linked (GlcNAc...) asparagine glycosylation is found at N153 and N184. Residues T186 and L188 each coordinate ATP. Position 186 (T186) interacts with CTP. N199 and N208 each carry an N-linked (GlcNAc...) asparagine glycan. 2 disulfides stabilise this stretch: C217–C227 and C261–C270. The ATP site is built by N293, R295, and K313. 3 residues coordinate CTP: N293, R295, and K313. A helical membrane pass occupies residues 339-359 (VGSGLALLGVATVLCDVIVLY). Over 360 to 388 (CMKKKYYYRDKKYKYVEDYEQGLSGEMNQ) the chain is Cytoplasmic.

Belongs to the P2X receptor family. Functional P2RXs are organized as homomeric and heteromeric trimers. Forms heterotrimer with P2RX1. Interacts with P2RX7 (via C-terminus); this interaction is functional only in the presence of ATP. Forms heterotrimer with P2RX4; functional differences between homomeric P2RX4 and P2RX4/6 heterotrimer are minor. Interacts with AP1M2. Widespread distribution in the brain. Strongly expressed in microglial cells. Also expressed in epithelial cells.

The protein localises to the cell membrane. It localises to the lysosome membrane. The catalysed reaction is K(+)(in) = K(+)(out). The enzyme catalyses Na(+)(in) = Na(+)(out). It carries out the reaction Ca(2+)(in) = Ca(2+)(out). With respect to regulation, activated by ATP. pH-dependent and inhibited by acidic pH. ATP-gated nonselective transmembrane cation channel permeable to potassium, sodium and calcium. CTP, but not GTP or UTP, functions as a weak affinity agonist for P2RX4. Activated by extracellularly released ATP, it plays multiple role in immunity and central nervous system physiology. Plays a key role in initial steps of T-cell activation and Ca(2+) microdomain formation. Also participates in basal T-cell activity without TCR/CD3 stimulation. Promotes the differentiation and activation of Th17 cells via expression of retinoic acid-related orphan receptor C/RORC. Upon activation, drives microglia motility via the PI3K/Akt pathway. Could also function as an ATP-gated cation channel of lysosomal membranes. This is P2X purinoceptor 4 (P2rx4) from Rattus norvegicus (Rat).